The sequence spans 176 residues: Large ribosomal subunit protein uL6 (176 aa).

This sequence belongs to the universal ribosomal protein uL6 family. In terms of assembly, part of the 50S ribosomal subunit.

This protein binds to the 23S rRNA, and is important in its secondary structure. It is located near the subunit interface in the base of the L7/L12 stalk, and near the tRNA binding site of the peptidyltransferase center. The polypeptide is Large ribosomal subunit protein uL6 (Lacticaseibacillus paracasei (strain ATCC 334 / BCRC 17002 / CCUG 31169 / CIP 107868 / KCTC 3260 / NRRL B-441) (Lactobacillus paracasei)).